Reading from the N-terminus, the 40-residue chain is Photosystem II reaction center protein J (40 aa).

Residues 8-28 (IPLWIIGTVAGIVVIGLIGLF) traverse the membrane as a helical segment.

Belongs to the PsbJ family. In terms of assembly, PSII is composed of 1 copy each of membrane proteins PsbA, PsbB, PsbC, PsbD, PsbE, PsbF, PsbH, PsbI, PsbJ, PsbK, PsbL, PsbM, PsbT, PsbX, PsbY, PsbZ, Psb30/Ycf12, at least 3 peripheral proteins of the oxygen-evolving complex and a large number of cofactors. It forms dimeric complexes.

Its subcellular location is the plastid. It localises to the chloroplast thylakoid membrane. In terms of biological role, one of the components of the core complex of photosystem II (PSII). PSII is a light-driven water:plastoquinone oxidoreductase that uses light energy to abstract electrons from H(2)O, generating O(2) and a proton gradient subsequently used for ATP formation. It consists of a core antenna complex that captures photons, and an electron transfer chain that converts photonic excitation into a charge separation. This Pisum sativum (Garden pea) protein is Photosystem II reaction center protein J.